The chain runs to 110 residues: UPF0251 protein PYRAB12660 (110 aa).

The protein belongs to the UPF0251 family.

This is UPF0251 protein PYRAB12660 from Pyrococcus abyssi (strain GE5 / Orsay).